The following is a 175-amino-acid chain: Ribosome maturation factor RimM (175 aa).

The PRC barrel domain maps to 96 to 172; that stretch reads PDTYYDHQLE…LIEIDPPDGL (77 aa).

Belongs to the RimM family. Binds ribosomal protein uS19.

It is found in the cytoplasm. Its function is as follows. An accessory protein needed during the final step in the assembly of 30S ribosomal subunit, possibly for assembly of the head region. Essential for efficient processing of 16S rRNA. May be needed both before and after RbfA during the maturation of 16S rRNA. It has affinity for free ribosomal 30S subunits but not for 70S ribosomes. The protein is Ribosome maturation factor RimM of Mycolicibacterium paratuberculosis (strain ATCC BAA-968 / K-10) (Mycobacterium paratuberculosis).